A 473-amino-acid polypeptide reads, in one-letter code: Spliceosome-associated protein CWC27 homolog (473 aa).

The residue at position 2 (Ser-2) is an N-acetylserine. The region spanning 11–166 (TNGKVLLKTT…NPHKIKSCEV (156 aa)) is the PPIase cyclophilin-type domain. Basic and acidic residues predominate over residues 177 to 193 (REIKRPKKEKPEEEVKK). 2 disordered regions span residues 177-386 (REIK…EDQT) and 399-473 (QAIA…KERR). Residues 206–230 (SFGEEAEEEEEEVNRVSQSMKGKSK) are a coiled coil. Over residues 231-241 (SSHDLLKDDPH) the composition is skewed to basic and acidic residues. Residues 257-275 (GDLDDDGEDESAEYDEYVD) show a composition bias toward acidic residues. 3 stretches are compositionally biased toward basic and acidic residues: residues 276–287 (GDEKNLMRERIA), 305–348 (EVEK…KRSE), and 360–372 (EYRR…EALR). Residues 307 to 378 (EKKSVSRSEE…EALRKQQSKK (72 aa)) adopt a coiled-coil conformation. Residue Ser-347 is modified to Phosphoserine. A compositionally biased stretch (acidic residues) spans 405 to 419 (PENDIPETEVEDDEG). Composition is skewed to basic and acidic residues over residues 426-438 (QFED…KDAS) and 458-473 (RREE…KERR).

Belongs to the cyclophilin-type PPIase family. Part of the activated spliceosome B/catalytic step 1 spliceosome, one of the forms of the spliceosome which has a well-formed active site but still cannot catalyze the branching reaction and is composed at least of 52 proteins, the U2, U5 and U6 snRNAs and the pre-mRNA. Recruited during early steps of activated spliceosome B maturation, it is probably one of the first proteins released from this complex as he matures to the spliceosome C complex. Component of the minor spliceosome, which splices U12-type introns.

The protein resides in the nucleus. As part of the spliceosome, plays a role in pre-mRNA splicing. Probable inactive PPIase with no peptidyl-prolyl cis-trans isomerase activity. As a component of the minor spliceosome, involved in the splicing of U12-type introns in pre-mRNAs. This chain is Spliceosome-associated protein CWC27 homolog, found in Macaca fascicularis (Crab-eating macaque).